We begin with the raw amino-acid sequence, 486 residues long: UDP-N-acetylglucosamine pyrophosphorylase (486 aa).

The Substrate binding signature appears at 109 to 112; sequence MAGG. UTP-binding positions include 109-112, Lys-123, Gln-199, and Gly-226; that span reads MAGG. A substrate-binding site is contributed by Asn-227. Residue Asp-257 coordinates UTP. Positions 309–310 match the Substrate binding motif; that stretch reads EY. Residue Lys-389 coordinates UTP. Position 421 (Lys-421) interacts with substrate.

This sequence belongs to the UDPGP type 1 family.

It localises to the cytoplasm. It catalyses the reaction N-acetyl-alpha-D-glucosamine 1-phosphate + UTP + H(+) = UDP-N-acetyl-alpha-D-glucosamine + diphosphate. It participates in nucleotide-sugar biosynthesis; UDP-N-acetyl-alpha-D-glucosamine biosynthesis; UDP-N-acetyl-alpha-D-glucosamine from N-acetyl-alpha-D-glucosamine 1-phosphate: step 1/1. The protein is UDP-N-acetylglucosamine pyrophosphorylase (UAP1) of Candida albicans (Yeast).